The chain runs to 2334 residues: Centriolin (2334 aa).

Residues 1–70 are disordered; the sequence is MKKGSERRLS…ESTVPLEPQQ (70 aa). Over residues 21–38 the composition is skewed to low complexity; it reads PGPSSLRSSMRSRSLSPL. LRR repeat units follow at residues 126-147, 148-169, 170-191, and 194-215; these read KLEV…DKLL, RLRE…ENMC, NLQK…FAKK, and SLRV…SKLK. The LRRCT domain occupies 228–266; the sequence is NPVVALPHYLQFIIFHLRSLESLEGQPVTTQDRQEAFER. Coiled coils occupy residues 265–343 and 437–800; these read ERFS…VELT and DLQL…LNHV. Disordered regions lie at residues 542–562 and 751–771; these read DSLD…RGKE and SLRD…ENNE. A Phosphoserine modification is found at serine 832. Residues 858 to 1102 adopt a coiled-coil conformation; it reads EKEEAQVRER…ITRLRDVLNL (245 aa). Disordered regions lie at residues 1154–1198, 1213–1245, and 1338–1360; these read SKVS…PLPA, KSFS…VPPP, and LKSK…EEVD. Residues 1227–1238 show a composition bias toward acidic residues; sequence SQEESGLDDQEE. Positions 1320 to 2169 form a coiled coil; the sequence is EHHNLENEVS…MRTLKSEVKD (850 aa). A Phosphoserine modification is found at serine 1478. The required for centrosome localization stretch occupies residues 1951-2121; that stretch reads MMFQKLQKER…ELVAQDNHER (171 aa). The sufficient for interaction with HOOK2 stretch occupies residues 1988–2334; it reads QKSRLKQLLT…PLEEPNSYRH (347 aa). Low complexity predominate over residues 2291-2307; it reads TSTSTDSASSPSLPSLV. A disordered region spans residues 2291–2334; the sequence is TSTSTDSASSPSLPSLVEDSQHGHSQSSFQVLQVPLEEPNSYRH.

In terms of assembly, interacts with HOOK2. Interacts with EXOC6 and SNAPIN. Associates with the exocyst complex. Highly expressed in liver.

The protein resides in the cytoplasm. It is found in the cytoskeleton. It localises to the microtubule organizing center. The protein localises to the centrosome. Its subcellular location is the midbody. The protein resides in the midbody ring. Involved in cell cycle progression and cytokinesis. During the late steps of cytokinesis, anchors exocyst and SNARE complexes at the midbody, thereby allowing secretory vesicle-mediated abscission. This chain is Centriolin (Cntrl), found in Mus musculus (Mouse).